A 247-amino-acid polypeptide reads, in one-letter code: Transmembrane protein 69 (247 aa).

5 helical membrane passes run 97–117 (ALCV…VMLM), 122–142 (IPIL…FLGG), 159–179 (YLNL…FLIS), 185–205 (AIVT…FLLP), and 216–236 (IVVT…KSSF).

The protein resides in the membrane. The chain is Transmembrane protein 69 (TMEM69) from Homo sapiens (Human).